The sequence spans 343 residues: Probable fructokinase-7 (343 aa).

Gly-2 bears the N-acetylglycine mark.

This sequence belongs to the carbohydrate kinase PfkB family.

The enzyme catalyses D-fructose + ATP = D-fructose 6-phosphate + ADP + H(+). It functions in the pathway glycan biosynthesis; starch biosynthesis. May play an important role in maintaining the flux of carbon towards starch formation. This chain is Probable fructokinase-7, found in Arabidopsis thaliana (Mouse-ear cress).